The primary structure comprises 141 residues: Hemoglobin subunit alpha (141 aa).

A Globin domain is found at 1–141 (VLSAADKANV…VSTVLTSKYR (141 aa)). Residue Ser3 is modified to Phosphoserine. N6-succinyllysine occurs at positions 7 and 11. Lys16 bears the N6-acetyllysine; alternate mark. Lys16 carries the N6-succinyllysine; alternate modification. The residue at position 40 (Lys40) is an N6-succinyllysine. Ser49 is modified (phosphoserine). His58 serves as a coordination point for O2. Position 87 (His87) interacts with heme b. At Ser102 the chain carries Phosphoserine. Thr108 carries the phosphothreonine modification. Phosphoserine is present on Ser124. A phosphothreonine mark is found at Thr134 and Thr137. Ser138 is modified (phosphoserine).

It belongs to the globin family. Heterotetramer of two alpha chains and two beta chains. Red blood cells.

Its function is as follows. Involved in oxygen transport from the lung to the various peripheral tissues. Hemopressin acts as an antagonist peptide of the cannabinoid receptor CNR1. Hemopressin-binding efficiently blocks cannabinoid receptor CNR1 and subsequent signaling. The sequence is that of Hemoglobin subunit alpha (HBA) from Sus scrofa (Pig).